Here is a 162-residue protein sequence, read N- to C-terminus: MRLALVAVGRLKRGPERELVETYRERADALARGLGFSAVQVTELAESRARRAPDRCAEEGAAILDAVPPGSALVVMDEGGRPVTSLALAEQVGAWRDGGRPGLAIVIGGADGLCESVKRRADLLFAFGAATLPHGLVRVLVLEQLYRVMTILAGHPYHRGAP.

Residue glycine 108 participates in S-adenosyl-L-methionine binding.

The protein belongs to the RNA methyltransferase RlmH family. Homodimer.

Its subcellular location is the cytoplasm. The catalysed reaction is pseudouridine(1915) in 23S rRNA + S-adenosyl-L-methionine = N(3)-methylpseudouridine(1915) in 23S rRNA + S-adenosyl-L-homocysteine + H(+). Its function is as follows. Specifically methylates the pseudouridine at position 1915 (m3Psi1915) in 23S rRNA. In Methylobacterium nodulans (strain LMG 21967 / CNCM I-2342 / ORS 2060), this protein is Ribosomal RNA large subunit methyltransferase H.